We begin with the raw amino-acid sequence, 452 residues long: MKEADAIKLFIGQIPRNLEEKDLKPIFEQFGKIYELTVIKDKYTGMHKGCAFLTYCARESALKAQNALHEQKTLPGMNRPIQVKPADSEGRGDRKLFVGMLGKQLSDADVRKMFEPFGSIEECTVLRGPDGASKGCAFVKYQSNAEAQAAISALHGSRTLPGASSSLVVKFADTEKERGIRRMQQVASQLGVISPMSLHLGAYNAYTQALVQQQALVAQSAYLSPVATVAAVQMQQLAALNPSSIIATPIASITPSSGTSTPPTIAATPVPALPPPIAVNSYPPVPAAPNGQSASEALYTNGVHPYQAQSPALDPLQQAYTGMQHYTATYPAAYGLVGQPFPHQPTLVAQQPQQPQQLQQREGPEGCNIFIYHLPQEFTDSEMLQMFLPFGNVISAKVFVDRATNQSKCFGFVSFDNPASAQAAIQAMNGFQIGMKRLKVQLKRPKDANRPY.

3 consecutive RRM domains span residues isoleucine 7–serine 88, arginine 94–threonine 174, and cysteine 367–proline 445.

It belongs to the CELF/BRUNOL family.

The protein localises to the nucleus. The protein resides in the cytoplasm. In terms of biological role, RNA-binding protein that may be involved in the regulation of pre-mRNA alternative splicing. The protein is CUGBP Elav-like family member 3 (celf3) of Danio rerio (Zebrafish).